A 250-amino-acid chain; its full sequence is Urease accessory protein UreD (250 aa).

This sequence belongs to the UreD family. UreD, UreF and UreG form a complex that acts as a GTP-hydrolysis-dependent molecular chaperone, activating the urease apoprotein by helping to assemble the nickel containing metallocenter of UreC. The UreE protein probably delivers the nickel.

It localises to the cytoplasm. Functionally, required for maturation of urease via the functional incorporation of the urease nickel metallocenter. In Aliarcobacter butzleri (strain RM4018) (Arcobacter butzleri), this protein is Urease accessory protein UreD.